The chain runs to 336 residues: Biotin synthase (336 aa).

One can recognise a Radical SAM core domain in the interval 51–270 (NQVQCNQLLN…IALARIMMPK (220 aa)). 3 residues coordinate [4Fe-4S] cluster: Cys66, Cys70, and Cys73. Residues Cys110, Cys141, Cys201, and Arg274 each contribute to the [2Fe-2S] cluster site.

It belongs to the radical SAM superfamily. Biotin synthase family. As to quaternary structure, homodimer. [4Fe-4S] cluster serves as cofactor. It depends on [2Fe-2S] cluster as a cofactor.

The catalysed reaction is (4R,5S)-dethiobiotin + (sulfur carrier)-SH + 2 reduced [2Fe-2S]-[ferredoxin] + 2 S-adenosyl-L-methionine = (sulfur carrier)-H + biotin + 2 5'-deoxyadenosine + 2 L-methionine + 2 oxidized [2Fe-2S]-[ferredoxin]. The protein operates within cofactor biosynthesis; biotin biosynthesis; biotin from 7,8-diaminononanoate: step 2/2. Catalyzes the conversion of dethiobiotin (DTB) to biotin by the insertion of a sulfur atom into dethiobiotin via a radical-based mechanism. This is Biotin synthase from Rhodopseudomonas palustris (strain ATCC BAA-98 / CGA009).